We begin with the raw amino-acid sequence, 447 residues long: UDP-glucosyl transferase 79T1 (447 aa).

Histidine 18 acts as the Proton acceptor in catalysis. The active-site Charge relay is the aspartate 116. Residues serine 265, tryptophan 323, valine 324, histidine 341, threonine 346, and glutamate 349 each coordinate UDP.

The protein belongs to the UDP-glycosyltransferase family. In terms of tissue distribution, mainly expressed in flowers, flower buds and young leaves, and, to a lesser extent, in old leaves, stems and roots.

It functions in the pathway secondary metabolite biosynthesis; terpenoid biosynthesis. Component of the oleanane-type triterpene saponins (e.g. saponarioside A and saponarioside B) biosynthetic pathway, leading to the production of natural products with detergent properties used as traditional sources of soap. A glycosyltransferase that mediates the conversion of QA-triF to QA-triFR via the elongation of the C-28 sugar chain with a deoxyhexose on the D-fucose moiety. The polypeptide is UDP-glucosyl transferase 79T1 (Saponaria officinalis (Common soapwort)).